The chain runs to 359 residues: Lipopolysaccharide 1,6-galactosyltransferase (359 aa).

UDP-binding residues include Gln242 and Glu274.

It belongs to the glycosyltransferase group 1 family. Glycosyltransferase 4 subfamily.

It catalyses the reaction alpha-D-Glc-(1-&gt;3)-[L-alpha-D-Hep-(1-&gt;7)]-4-O-PO3(2-)-L-alpha-D-Hep-(1-&gt;3)-4-O-PO3(2-)-L-alpha-D-Hep-(1-&gt;5)-[alpha-Kdo-(2-&gt;4)]-alpha-Kdo-(2-&gt;6)-lipid A + UDP-alpha-D-galactose = alpha-D-Gal-(1-&gt;6)-alpha-D-Glc-(1-&gt;3)-[L-alpha-D-Hep-(1-&gt;7)]-4-O-PO3(2-)-L-alpha-D-Hep-(1-&gt;3)-4-O-PO3(2-)-L-alpha-D-Hep-(1-&gt;5)-[alpha-Kdo-(2-&gt;4)]-alpha-Kdo-(2-&gt;6)-lipid A + UDP + H(+). The protein operates within bacterial outer membrane biogenesis; LPS core biosynthesis. Functionally, galactosyltransferase involved in the biosynthesis of the core oligosaccharide region of lipopolysaccharide (LPS). Catalyzes the addition of galactose from UDP-galactose to the first glucose residue of the LPS outer core. Cannot use other sugar donors, such as UDP-glucose, UDP-glucuronic acid, UDP-galacuronic acid, GDP-mannose, ADP-glucose and GDP-glucose. In the absence of a lipid acceptor, can hydrolyze UDP-galactose to UDP and galactose. This chain is Lipopolysaccharide 1,6-galactosyltransferase, found in Escherichia coli (strain K12).